The primary structure comprises 728 residues: MDKETIKAHKISDEEYAQILEILGREPNLLELGVISAMWSEHCSYKSSKKYLNGFPTKAPWVIQGPGENAGVIDIGQGMAAVFKVESHNHPSFIEPFAGAATGVGGILRDVFTMGARVVAGLNSLKFGDIHDEKCGKHQKYLVKGVVNGISHYGNCMGVPTIGGECAFDECFNGNILVNAFALGVCKSEDIFYAKAEGVGNPVIYVGSKTGRDGLGGAVMASDSFNEESKSLRPTVQIGDPFSEKLLMEACLELFKTDYIVGIQDMGAAGLTSSSFEMAGRSGSGMKLYLDKTPMRESGMTPYELMLSESQERMLICAKKGYEDKVIEIFKKWDLDAVVMGEVTNTGKMELFWHDELVGLIPIEPLSEKAPILSRPTSEPKYLSEIKNYKFELKSSVQELFIQMLQNENINNKAFIYDQFDSSVQTNTIKADGRLGASVIRIKENGASVAMAIECNSRLNYVNPKIGAALAVASAGRKVACTGAKPLAISDCLNYGNPQNPEVMWQFAQGCEGIKEACKELNTPVVSGNVSLYNETEGVSIYPSPTIVSVGVLEDANKTLKASFEKENLSVYLLGESLGEFSGSMVMKIQDKKVSGSLKELDYKAELALWDLLYKANQNSLLECANSVGIGGIAMTLAKMFAISSVGANLTSDFDDEKMIFDESASRAIIGLSKENEEAFLNLAKEFGVKAYKLGVSTSQKHFKLDSIELSKAELDKLYFESFKEQIQ.

The active site involves His42. ATP is bound by residues Tyr45 and Lys84. Mg(2+) is bound at residue Glu86. Residues 87 to 90 (SHNH) and Arg109 contribute to the substrate site. The active-site Proton acceptor is His88. Mg(2+) is bound at residue Asp110. Gln237 lines the substrate pocket. A Mg(2+)-binding site is contributed by Asp265. A substrate-binding site is contributed by 309–311 (ESQ). Residues Asp491 and Gly528 each coordinate ATP. Asn529 serves as a coordination point for Mg(2+). Ser531 contributes to the substrate binding site.

It belongs to the FGAMS family. As to quaternary structure, monomer. Part of the FGAM synthase complex composed of 1 PurL, 1 PurQ and 2 PurS subunits.

It is found in the cytoplasm. It carries out the reaction N(2)-formyl-N(1)-(5-phospho-beta-D-ribosyl)glycinamide + L-glutamine + ATP + H2O = 2-formamido-N(1)-(5-O-phospho-beta-D-ribosyl)acetamidine + L-glutamate + ADP + phosphate + H(+). It functions in the pathway purine metabolism; IMP biosynthesis via de novo pathway; 5-amino-1-(5-phospho-D-ribosyl)imidazole from N(2)-formyl-N(1)-(5-phospho-D-ribosyl)glycinamide: step 1/2. Its function is as follows. Part of the phosphoribosylformylglycinamidine synthase complex involved in the purines biosynthetic pathway. Catalyzes the ATP-dependent conversion of formylglycinamide ribonucleotide (FGAR) and glutamine to yield formylglycinamidine ribonucleotide (FGAM) and glutamate. The FGAM synthase complex is composed of three subunits. PurQ produces an ammonia molecule by converting glutamine to glutamate. PurL transfers the ammonia molecule to FGAR to form FGAM in an ATP-dependent manner. PurS interacts with PurQ and PurL and is thought to assist in the transfer of the ammonia molecule from PurQ to PurL. In Campylobacter jejuni subsp. jejuni serotype O:23/36 (strain 81-176), this protein is Phosphoribosylformylglycinamidine synthase subunit PurL.